Here is a 623-residue protein sequence, read N- to C-terminus: Sterol O-acyltransferase 1 (623 aa).

Residues 20 to 99 (NSAEPSKRHS…EQAEEKYPVD (80 aa)) are disordered. A compositionally biased stretch (low complexity) spans 57-72 (ATTTATGVAVAAAAAA). Residues 83-92 (DGDDEQDEQA) show a composition bias toward acidic residues. Helical transmembrane passes span 195-215 (LESN…WIAF), 242-262 (LFTI…VVFV), 277-297 (GFVA…PVYV), 384-404 (ISCS…QINY), and 422-442 (IMGT…PVAM). The FYXDWWN motif motif lies at 504-510 (FYGDWWN). 2 helical membrane passes run 548-568 (ATLF…FAIF) and 603-623 (VVFT…YLTL). His-560 is an active-site residue.

The protein belongs to the membrane-bound acyltransferase family. Sterol o-acyltransferase subfamily.

It localises to the endoplasmic reticulum membrane. Its function is as follows. Sterol O-acyltransferase that catalyzes the formation of stery esters. This chain is Sterol O-acyltransferase 1 (ARE1), found in Saccharomyces uvarum (strain ATCC 76518 / CBS 7001 / CLIB 283 / NBRC 10550 / MCYC 623 / NCYC 2669 / NRRL Y-11845) (Yeast).